We begin with the raw amino-acid sequence, 920 residues long: Isoleucine--tRNA ligase (920 aa).

The short motif at 58 to 68 is the 'HIGH' region element; that stretch reads PYANGHLHLGH. E569 provides a ligand contact to L-isoleucyl-5'-AMP. The short motif at 610–614 is the 'KMSKS' region element; the sequence is KMSKS. ATP is bound at residue K613. Zn(2+) contacts are provided by C895, C898, C910, and C913.

The protein belongs to the class-I aminoacyl-tRNA synthetase family. IleS type 1 subfamily. In terms of assembly, monomer. Requires Zn(2+) as cofactor.

It is found in the cytoplasm. The catalysed reaction is tRNA(Ile) + L-isoleucine + ATP = L-isoleucyl-tRNA(Ile) + AMP + diphosphate. In terms of biological role, catalyzes the attachment of isoleucine to tRNA(Ile). As IleRS can inadvertently accommodate and process structurally similar amino acids such as valine, to avoid such errors it has two additional distinct tRNA(Ile)-dependent editing activities. One activity is designated as 'pretransfer' editing and involves the hydrolysis of activated Val-AMP. The other activity is designated 'posttransfer' editing and involves deacylation of mischarged Val-tRNA(Ile). This is Isoleucine--tRNA ligase from Helicobacter pylori (strain HPAG1).